The primary structure comprises 142 residues: Alpha-lactalbumin (142 aa).

An N-terminal signal peptide occupies residues 1 to 19 (MMSFVSLLLVGILFHATQA). The region spanning 20–142 (EQLTKCEVFQ…KLDQWLCEKL (123 aa)) is the C-type lysozyme domain. Cystine bridges form between cysteine 25-cysteine 139, cysteine 47-cysteine 130, cysteine 80-cysteine 96, and cysteine 92-cysteine 110. N-linked (GlcNAc...) asparagine glycosylation is found at asparagine 64 and asparagine 93. 5 residues coordinate Ca(2+): lysine 98, aspartate 101, aspartate 103, aspartate 106, and aspartate 107.

Belongs to the glycosyl hydrolase 22 family. As to quaternary structure, lactose synthase (LS) is a heterodimer of a catalytic component, beta1,4-galactosyltransferase (beta4Gal-T1) and a regulatory component, alpha-lactalbumin (LA). Mammary gland specific. Secreted in milk.

Its subcellular location is the secreted. Regulatory subunit of lactose synthase, changes the substrate specificity of galactosyltransferase in the mammary gland making glucose a good acceptor substrate for this enzyme. This enables LS to synthesize lactose, the major carbohydrate component of milk. In other tissues, galactosyltransferase transfers galactose onto the N-acetylglucosamine of the oligosaccharide chains in glycoproteins. This Ovis aries (Sheep) protein is Alpha-lactalbumin (LALBA).